Consider the following 148-residue polypeptide: Lysozyme C (148 aa).

Residues 1–18 form the signal peptide; the sequence is MKALTILGLVLLSVTVQG. In terms of domain architecture, C-type lysozyme spans 19–148; the sequence is KIFERCELAR…VSQYVKGCGV (130 aa). 4 disulfide bridges follow: Cys-24–Cys-146, Cys-48–Cys-134, Cys-83–Cys-99, and Cys-95–Cys-113. Residues Glu-53 and Asp-71 contribute to the active site.

This sequence belongs to the glycosyl hydrolase 22 family. Monomer.

Its subcellular location is the secreted. It carries out the reaction Hydrolysis of (1-&gt;4)-beta-linkages between N-acetylmuramic acid and N-acetyl-D-glucosamine residues in a peptidoglycan and between N-acetyl-D-glucosamine residues in chitodextrins.. Lysozymes have primarily a bacteriolytic function; those in tissues and body fluids are associated with the monocyte-macrophage system and enhance the activity of immunoagents. Also plays a role in digestion in this species. The sequence is that of Lysozyme C (LYZ) from Semnopithecus entellus (Northern plains gray langur).